Consider the following 555-residue polypeptide: Membrane protein insertase YidC (555 aa).

The helical transmembrane segment at 7-24 (ILWVIFSMSLVLLYDNWQ) threads the bilayer. The disordered stretch occupies residues 61 to 81 (TAGAAAPAAPGGAPQAAAQPT). The next 5 helical transmembrane spans lie at 341–361 (GWLT…HGFL), 364–384 (WGWS…PLSA), 430–450 (LGGC…YWVL), 468–488 (LSVP…MFVQ), and 503–523 (VMMI…AGLV).

It belongs to the OXA1/ALB3/YidC family. Type 1 subfamily. As to quaternary structure, interacts with the Sec translocase complex via SecD. Specifically interacts with transmembrane segments of nascent integral membrane proteins during membrane integration.

It localises to the cell inner membrane. In terms of biological role, required for the insertion and/or proper folding and/or complex formation of integral membrane proteins into the membrane. Involved in integration of membrane proteins that insert both dependently and independently of the Sec translocase complex, as well as at least some lipoproteins. Aids folding of multispanning membrane proteins. The polypeptide is Membrane protein insertase YidC (Cupriavidus pinatubonensis (strain JMP 134 / LMG 1197) (Cupriavidus necator (strain JMP 134))).